The following is a 124-amino-acid chain: Small ribosomal subunit protein uS13 (124 aa).

Positions R99–S124 are disordered. Over residues Q101 to S124 the composition is skewed to basic residues.

The protein belongs to the universal ribosomal protein uS13 family. As to quaternary structure, part of the 30S ribosomal subunit. Forms a loose heterodimer with protein S19. Forms two bridges to the 50S subunit in the 70S ribosome.

Its function is as follows. Located at the top of the head of the 30S subunit, it contacts several helices of the 16S rRNA. In the 70S ribosome it contacts the 23S rRNA (bridge B1a) and protein L5 of the 50S subunit (bridge B1b), connecting the 2 subunits; these bridges are implicated in subunit movement. Contacts the tRNAs in the A and P-sites. This chain is Small ribosomal subunit protein uS13, found in Caldicellulosiruptor bescii (strain ATCC BAA-1888 / DSM 6725 / KCTC 15123 / Z-1320) (Anaerocellum thermophilum).